Consider the following 124-residue polypeptide: Small ribosomal subunit protein bS6 (124 aa).

A disordered region spans residues 98–124 (EASPMLKAREERPRREDVREEAEEAAE). Basic and acidic residues predominate over residues 104–115 (KAREERPRREDV).

It belongs to the bacterial ribosomal protein bS6 family.

Binds together with bS18 to 16S ribosomal RNA. This is Small ribosomal subunit protein bS6 from Tolumonas auensis (strain DSM 9187 / NBRC 110442 / TA 4).